Here is a 945-residue protein sequence, read N- to C-terminus: Leucine--tRNA ligase (945 aa).

The 'HIGH' region signature appears at 66–77 (PYPSGTGLHVGH). The 'KMSKS' region signature appears at 716–720 (KMGKS). K719 is a binding site for ATP.

This sequence belongs to the class-I aminoacyl-tRNA synthetase family.

The protein localises to the cytoplasm. The catalysed reaction is tRNA(Leu) + L-leucine + ATP = L-leucyl-tRNA(Leu) + AMP + diphosphate. The sequence is that of Leucine--tRNA ligase from Rhodococcus jostii (strain RHA1).